Reading from the N-terminus, the 32-residue chain is Photosystem I reaction center subunit XII (32 aa).

Residues 4–26 (ISDSQIIVILLSVFITSILALRL) form a helical membrane-spanning segment.

This sequence belongs to the PsaM family.

The protein resides in the plastid. Its subcellular location is the chloroplast thylakoid membrane. This Marchantia polymorpha (Common liverwort) protein is Photosystem I reaction center subunit XII.